We begin with the raw amino-acid sequence, 434 residues long: Tryptophan--tRNA ligase (434 aa).

Residues 14-16 (TTS) and 22-23 (GN) contribute to the ATP site. The 'HIGH' region signature appears at 15 to 23 (TSGTPHLGN). D147 contributes to the L-tryptophan binding site. ATP contacts are provided by residues 159–161 (GRD), L199, and 206–210 (KMSKS). A 'KMSKS' region motif is present at residues 206–210 (KMSKS).

The protein belongs to the class-I aminoacyl-tRNA synthetase family. In terms of assembly, homodimer.

The protein localises to the cytoplasm. It carries out the reaction tRNA(Trp) + L-tryptophan + ATP = L-tryptophyl-tRNA(Trp) + AMP + diphosphate + H(+). Its function is as follows. Catalyzes the attachment of tryptophan to tRNA(Trp). The chain is Tryptophan--tRNA ligase from Xylella fastidiosa (strain 9a5c).